The sequence spans 431 residues: Adenylosuccinate synthetase (431 aa).

GTP-binding positions include 13 to 19 (GDEGKGK) and 41 to 43 (GHT). The active-site Proton acceptor is Asp-14. 2 residues coordinate Mg(2+): Asp-14 and Gly-41. IMP-binding positions include 14 to 17 (DEGK), 39 to 42 (NAGH), Thr-130, Arg-144, Gln-225, Thr-240, and Arg-304. Residue His-42 is the Proton donor of the active site. 300–306 (ATTGRQR) is a substrate binding site. GTP contacts are provided by residues Arg-306, 332–334 (KLD), and 414–416 (STG).

Belongs to the adenylosuccinate synthetase family. As to quaternary structure, homodimer. Mg(2+) is required as a cofactor.

The protein localises to the cytoplasm. It catalyses the reaction IMP + L-aspartate + GTP = N(6)-(1,2-dicarboxyethyl)-AMP + GDP + phosphate + 2 H(+). The protein operates within purine metabolism; AMP biosynthesis via de novo pathway; AMP from IMP: step 1/2. In terms of biological role, plays an important role in the de novo pathway of purine nucleotide biosynthesis. Catalyzes the first committed step in the biosynthesis of AMP from IMP. In Saccharophagus degradans (strain 2-40 / ATCC 43961 / DSM 17024), this protein is Adenylosuccinate synthetase.